Reading from the N-terminus, the 252-residue chain is Major prion protein (252 aa).

Positions 1 to 22 are cleaved as a signal peptide; that stretch reads MANLGCWMLVLFVATWSDLGLC. Residues 23-38 form an interaction with ADGRG6 region; sequence KKRPKPGGWNTGGSRY. The interaction with GRB2, ERI3 and SYN1 stretch occupies residues 23 to 229; that stretch reads KKRPKPGGWN…ESQAYYQRGS (207 aa). Residues 26–106 form a disordered region; sequence PKPGGWNTGG…QWNKPSKPKT (81 aa). 5 tandem repeats follow at residues 51 to 58, 59 to 66, 67 to 74, 75 to 82, and 83 to 90. The tract at residues 51 to 90 is 5 X 8 AA tandem repeats of P-H-G-G-G-W-G-Q; sequence PQGGGWGQPHGGGWGQPHGGGWGQPHGGSWGQPHGGGWGQ. Residues 52–94 show a composition bias toward gly residues; the sequence is QGGGWGQPHGGGWGQPHGGGWGQPHGGSWGQPHGGGWGQGGGT. Residues His-60, Gly-61, Gly-62, His-68, Gly-69, Gly-70, His-76, Gly-77, Gly-78, His-84, Gly-85, and Gly-86 each contribute to the Cu(2+) site. A disulfide bond links Cys-178 and Cys-213. Residues Asn-180 and Asn-196 are each glycosylated (N-linked (GlcNAc...) asparagine). Ser-229 is lipidated: GPI-anchor amidated serine. Residues 230–252 constitute a propeptide, removed in mature form; that stretch reads SMVLFSSPPVILLISFLIFLIVG.

The protein belongs to the prion family. In terms of assembly, monomer and homodimer. Has a tendency to aggregate into amyloid fibrils containing a cross-beta spine, formed by a steric zipper of superposed beta-strands. Soluble oligomers may represent an intermediate stage on the path to fibril formation. Copper binding may promote oligomerization. Interacts with GRB2, APP, ERI3/PRNPIP and SYN1. Mislocalized cytosolically exposed PrP interacts with MGRN1; this interaction alters MGRN1 subcellular location and causes lysosomal enlargement. Interacts with APP. Interacts with KIAA1191. Interacts with ADGRG6.

The protein localises to the cell membrane. It is found in the golgi apparatus. Its function is as follows. Its primary physiological function is unclear. May play a role in neuronal development and synaptic plasticity. May be required for neuronal myelin sheath maintenance. May promote myelin homeostasis through acting as an agonist for ADGRG6 receptor. May play a role in iron uptake and iron homeostasis. Soluble oligomers are toxic to cultured neuroblastoma cells and induce apoptosis (in vitro). Association with GPC1 (via its heparan sulfate chains) targets PRNP to lipid rafts. Also provides Cu(2+) or Zn(2+) for the ascorbate-mediated GPC1 deaminase degradation of its heparan sulfate side chains. The sequence is that of Major prion protein (PRNP) from Sapajus apella (Brown-capped capuchin).